Here is a 396-residue protein sequence, read N- to C-terminus: 1-deoxy-D-xylulose 5-phosphate reductoisomerase (396 aa).

Positions 13, 14, 15, 16, and 127 each coordinate NADPH. K128 is a binding site for 1-deoxy-D-xylulose 5-phosphate. E129 contacts NADPH. D153 lines the Mn(2+) pocket. Residues S154, E155, S184, and H207 each contribute to the 1-deoxy-D-xylulose 5-phosphate site. E155 is a Mn(2+) binding site. An NADPH-binding site is contributed by G213. 1-deoxy-D-xylulose 5-phosphate contacts are provided by S220, N225, K226, and E229. E229 is a binding site for Mn(2+).

This sequence belongs to the DXR family. The cofactor is Mg(2+). Mn(2+) is required as a cofactor.

The enzyme catalyses 2-C-methyl-D-erythritol 4-phosphate + NADP(+) = 1-deoxy-D-xylulose 5-phosphate + NADPH + H(+). It functions in the pathway isoprenoid biosynthesis; isopentenyl diphosphate biosynthesis via DXP pathway; isopentenyl diphosphate from 1-deoxy-D-xylulose 5-phosphate: step 1/6. Its function is as follows. Catalyzes the NADPH-dependent rearrangement and reduction of 1-deoxy-D-xylulose-5-phosphate (DXP) to 2-C-methyl-D-erythritol 4-phosphate (MEP). The protein is 1-deoxy-D-xylulose 5-phosphate reductoisomerase of Pseudomonas fluorescens (strain SBW25).